The primary structure comprises 601 residues: Aspartate--tRNA(Asp/Asn) ligase (601 aa).

Residue glutamate 174 participates in L-aspartate binding. Residues 198-201 (QLFK) are aspartate. Residue arginine 220 participates in L-aspartate binding. Residues 220–222 (RDE) and glutamine 229 contribute to the ATP site. Histidine 459 provides a ligand contact to L-aspartate. Glutamate 493 contacts ATP. Arginine 500 provides a ligand contact to L-aspartate. 545 to 548 (GLDR) is an ATP binding site.

It belongs to the class-II aminoacyl-tRNA synthetase family. Type 1 subfamily. As to quaternary structure, homodimer.

The protein resides in the cytoplasm. It catalyses the reaction tRNA(Asx) + L-aspartate + ATP = L-aspartyl-tRNA(Asx) + AMP + diphosphate. Aspartyl-tRNA synthetase with relaxed tRNA specificity since it is able to aspartylate not only its cognate tRNA(Asp) but also tRNA(Asn). Reaction proceeds in two steps: L-aspartate is first activated by ATP to form Asp-AMP and then transferred to the acceptor end of tRNA(Asp/Asn). This is Aspartate--tRNA(Asp/Asn) ligase from Variovorax paradoxus (strain S110).